The primary structure comprises 953 residues: Glutamate receptor 3.5 (953 aa).

Positions 1-29 (MGFFVMIRDVSMGFMLLCISALWVLPIQG) are cleaved as a signal peptide. The Extracellular segment spans residues 30–606 (AGRESFSRNS…SPWSFLKPFT (577 aa)). N38, N95, N223, N371, N397, N436, N454, and N569 each carry an N-linked (GlcNAc...) asparagine glycan. A helical transmembrane segment spans residues 607-627 (IEMWAVTGALFLFVGAVIWIL). Residues 628–636 (EHRFNEEFR) are Cytoplasmic-facing. A helical transmembrane segment spans residues 637 to 657 (GPPRRQIITVFWFSFSTMFFS). Residues 658-668 (HRENTVSTLGR) are Cytoplasmic-facing. Residues 669–689 (FVLLVWLFVVLIINSSYTASL) form a helical membrane-spanning segment. At 690-850 (TSILTVQQLT…TENYQISVQS (161 aa)) the chain is on the extracellular side. The chain crosses the membrane as a helical span at residues 851 to 871 (FWGLFLICGVVWFIALTLFCW). The Cytoplasmic portion of the chain corresponds to 872–953 (KVFWQYQRLR…SQSKDHETPQ (82 aa)). Residues 928 to 953 (EKSSKKLKDGQSSAENSQSKDHETPQ) are disordered.

This sequence belongs to the glutamate-gated ion channel (TC 1.A.10.1) family. As to quaternary structure, may form heteromers. In terms of tissue distribution, expressed predominantly in roots. Also detected in shoots.

It localises to the membrane. Its function is as follows. Glutamate-gated receptor that probably acts as a non-selective cation channel. May be involved in light-signal transduction and calcium homeostasis via the regulation of calcium influx into cells. This chain is Glutamate receptor 3.5 (GLR3.5), found in Arabidopsis thaliana (Mouse-ear cress).